We begin with the raw amino-acid sequence, 140 residues long: Lymphocyte antigen 6H (140 aa).

The N-terminal stretch at 1–25 (MLPAAMKGLGLALLAVLLCSAPAHG) is a signal peptide. Residues 26-91 (LWCQDCTLTT…RHFFSDYLMG (66 aa)) form the UPAR/Ly6 domain. Cystine bridges form between Cys-28/Cys-52, Cys-31/Cys-40, Cys-45/Cys-73, Cys-77/Cys-104, and Cys-105/Cys-110. Asn-36 carries N-linked (GlcNAc...) asparagine glycosylation. A lipid anchor (GPI-anchor amidated glycine) is attached at Gly-115. A propeptide spans 116–140 (AGHSPWALAGGLLLSLGPALLWAGP) (removed in mature form).

Interacts with CHRNA4 and CHRNA7. Highly expressed in brain (cerebral cortex, amygdala, hippocampus and subthalamic nucleus) and in acute human leukemic cell line MOLT-3. Also found in lower levels in testis, pancreas, small intestine and colon.

The protein localises to the cell membrane. Functionally, believed to act as a modulator of nicotinic acetylcholine receptors (nAChRs) activity. In vitro inhibits alpha-3:beta-4-containing nAChRs maximum response. May play a role in the intracellular trafficking of alpha-7-containing nAChRs and may inhibit their expression at the cell surface. Seems to inhibit alpha-7/CHRNA7 signaling in hippocampal neurons. This is Lymphocyte antigen 6H (LY6H) from Homo sapiens (Human).